Here is a 217-residue protein sequence, read N- to C-terminus: Large ribosomal subunit protein uL3 (217 aa).

It belongs to the universal ribosomal protein uL3 family. In terms of assembly, part of the 50S ribosomal subunit. Forms a cluster with proteins L14 and L19.

In terms of biological role, one of the primary rRNA binding proteins, it binds directly near the 3'-end of the 23S rRNA, where it nucleates assembly of the 50S subunit. The polypeptide is Large ribosomal subunit protein uL3 (Mycobacterium marinum (strain ATCC BAA-535 / M)).